The primary structure comprises 134 residues: uncharacterized protein (134 aa).

Transmembrane regions (helical) follow at residues 16–36 (IFSF…NTKL) and 43–63 (IAYF…IHGT).

It belongs to the plectrovirus ORF5 family.

The protein resides in the host membrane. This is an uncharacterized protein from Spiroplasma citri (SpV1).